Reading from the N-terminus, the 897-residue chain is MSNEESFTEKPLKKRSRAHRLGDPRFYCTYPDCPKSFTRKEHLRRHERTHENVKAFSCSFCNRAFARSDVLNRHVQQMHLQKQNLSERRMLNASCFLGFCVLAHDYVNLINARHFMIEHFLSLFAFCRTILFSLLTSFLLVPPPQFFHSEAGERPTPSVGAPSSLASSMDSVRVAPSMLAASHQIVPQYSENNPRVSNEPPRVTIENASLKPFSGYIKSHMSTSNFLNGEPDLNVNVDLSPFPNLPATVPITQAASTANAFQQPSNQFQTQKLPSGLDTRPVSSYPDELTQLESNPDSFSRLDLQGDCTCIFKNRSSIASSRTMDDVVRWLFSSGKRRQKYESSYPYQTQSNQIPSQDQYSDTDSNFLSYYFSASGPMYVPQKCPATVYNNLLNFLEGSFHLQPNFLAMFTLESVSSWLNAYWSMFHVRWPILHRGTFQITQAPLDLLLSMITLGMHSSNDLSIRSLAVEIHTTLRYNIYQKQEFGPPVSLWVYQALFLIQVFELFTSNLKQHRLAQMFHPVLIEAMRQAIPSDALTVRSETFGESNTPLTLQQWHKWITRESVKRIAFFVFALDSTSTLVFGNQPLLYVTDVSMPLLAEEHHWEAENFEVWAAQKPTIEPPTILHMLKAFVQCEQCESPLPKLSPWNMLLLLHGLLSVDISLKQKKFVPGMKLSKREIDGWCSLVFEAYQKWNRCYYSIFLNNNILPFGHPFVKECRSLYNLACIYSKTRLTYLQAFAKAVTDPVDGSVTSKTVAPLRYVKIWANTENARYSTSNALEILDMLLREKIESAPRYDTLIYHSWCYYVAALVLWSIGFALDEENKKTEEVTNLHSQMSRYVTKVRQALEQGEPLFAVVEKSKNPIILHVVLQALDVFPWDLLGEHKKIIQQLLSKGND.

2 consecutive C2H2-type zinc fingers follow at residues 26 to 50 (FYCT…ERTH) and 56 to 79 (FSCS…QQMH). A C2H2-type 3; atypical zinc finger spans residues 93-119 (ASCFLGFCVLAHDYVNLINARHFMIEH).

The protein resides in the nucleus. This chain is Zinc finger protein zas1 (zas1), found in Schizosaccharomyces pombe (strain 972 / ATCC 24843) (Fission yeast).